Reading from the N-terminus, the 195-residue chain is Molybdenum cofactor guanylyltransferase (195 aa).

Residues 10–12 (LAG), K23, N51, D69, and D99 each bind GTP. D99 contributes to the Mg(2+) binding site.

The protein belongs to the MobA family. As to quaternary structure, monomer. Mg(2+) is required as a cofactor.

The protein localises to the cytoplasm. It catalyses the reaction Mo-molybdopterin + GTP + H(+) = Mo-molybdopterin guanine dinucleotide + diphosphate. Functionally, transfers a GMP moiety from GTP to Mo-molybdopterin (Mo-MPT) cofactor (Moco or molybdenum cofactor) to form Mo-molybdopterin guanine dinucleotide (Mo-MGD) cofactor. The polypeptide is Molybdenum cofactor guanylyltransferase (Shewanella putrefaciens (strain CN-32 / ATCC BAA-453)).